The sequence spans 1888 residues: E3 ubiquitin-protein ligase UBR3 (1888 aa).

Positions 1-24 (MAAAAAAAVGGQQPSQPELPAPGL) are disordered. A UBR-type zinc finger spans residues 118–189 (ALCGLVWTAN…ESGFCKRHQI (72 aa)). Residues 339 to 362 (GQVDSSDEDDQDGSQGLGKRKRVK) are disordered. A phosphoserine mark is found at Ser-343 and Ser-344. Transmembrane regions (helical) follow at residues 761 to 781 (MLEG…HLGM) and 919 to 939 (LLHC…ILMD). Disordered stretches follow at residues 1008-1028 (APEV…GSLQ) and 1164-1186 (VPPK…RQKA). The span at 1016 to 1028 (PASTSSDNLGSLQ) shows a compositional bias: polar residues. Residues 1168–1199 (KVTAAEKKTLDKEERRQKARERQQKLLAEFAS) are a coiled coil. The span at 1170–1186 (TAAEKKTLDKEERRQKA) shows a compositional bias: basic and acidic residues. A Phosphoserine modification is found at Ser-1199. An RING-type; degenerate zinc finger spans residues 1306 to 1364 (DSSCLLAVSIGWEGGVYVQTCGHTLHIDCHKSYMESLRNDQVLQGFSVDKGEFTCPLCR). A helical transmembrane segment spans residues 1806–1826 (QNCGAGTGIFLLINASVIIII).

It belongs to the E3 ubiquitin-protein ligase UBR1-like family. In terms of assembly, interacts with UBE2A and UBE2B.

The protein localises to the membrane. The enzyme catalyses S-ubiquitinyl-[E2 ubiquitin-conjugating enzyme]-L-cysteine + [acceptor protein]-L-lysine = [E2 ubiquitin-conjugating enzyme]-L-cysteine + N(6)-ubiquitinyl-[acceptor protein]-L-lysine.. The protein operates within protein modification; protein ubiquitination. Its function is as follows. E3 ubiquitin-protein ligase which is a component of the N-end rule pathway. Does not bind to proteins bearing specific N-terminal residues that are destabilizing according to the N-end rule, leading to their ubiquitination and subsequent degradation. May play a role in Shh signaling by mediating the ubiquitination of Kif7. May be important for MYH9 function in certain tissues, possibly by regulating the ubiquitination of MYH9 and consequently affecting its interaction with MYO7A. The sequence is that of E3 ubiquitin-protein ligase UBR3 (UBR3) from Homo sapiens (Human).